We begin with the raw amino-acid sequence, 302 residues long: Sulfate adenylyltransferase subunit 2 (302 aa).

Residues 279 to 302 (ERQGRAIDHDQSGSMELKKRQGYF) are disordered. The span at 280-302 (RQGRAIDHDQSGSMELKKRQGYF) shows a compositional bias: basic and acidic residues.

Belongs to the PAPS reductase family. CysD subfamily. As to quaternary structure, heterodimer composed of CysD, the smaller subunit, and CysN.

It carries out the reaction sulfate + ATP + H(+) = adenosine 5'-phosphosulfate + diphosphate. It functions in the pathway sulfur metabolism; hydrogen sulfide biosynthesis; sulfite from sulfate: step 1/3. In terms of biological role, with CysN forms the ATP sulfurylase (ATPS) that catalyzes the adenylation of sulfate producing adenosine 5'-phosphosulfate (APS) and diphosphate, the first enzymatic step in sulfur assimilation pathway. APS synthesis involves the formation of a high-energy phosphoric-sulfuric acid anhydride bond driven by GTP hydrolysis by CysN coupled to ATP hydrolysis by CysD. This chain is Sulfate adenylyltransferase subunit 2, found in Photobacterium profundum (strain SS9).